We begin with the raw amino-acid sequence, 109 residues long: COX assembly mitochondrial protein 2 (109 aa).

Positions Phe10 to Asn54 constitute a CHCH domain. 2 consecutive short sequence motifs (cx9C motif) follow at residues Cys13–Cys23 and Cys36–Cys46. 2 cysteine pairs are disulfide-bonded: Cys13–Cys46 and Cys23–Cys36.

Belongs to the CMC family. Interacts with CMC1.

It is found in the mitochondrion inner membrane. It localises to the mitochondrion intermembrane space. Required for mitochondrial cytochrome c oxidase (COX) assembly and respiration. May be involved in copper trafficking and distribution to mitochondrial COX and SOD1. This chain is COX assembly mitochondrial protein 2 (CMC2), found in Saccharomyces cerevisiae (strain ATCC 204508 / S288c) (Baker's yeast).